The sequence spans 478 residues: UDP-N-acetylmuramate--L-alanine ligase (478 aa).

ATP is bound at residue 125 to 131 (GTHGKTT).

This sequence belongs to the MurCDEF family.

The protein resides in the cytoplasm. The enzyme catalyses UDP-N-acetyl-alpha-D-muramate + L-alanine + ATP = UDP-N-acetyl-alpha-D-muramoyl-L-alanine + ADP + phosphate + H(+). It functions in the pathway cell wall biogenesis; peptidoglycan biosynthesis. Functionally, cell wall formation. In Dichelobacter nodosus (strain VCS1703A), this protein is UDP-N-acetylmuramate--L-alanine ligase.